Reading from the N-terminus, the 295-residue chain is Small ribosomal subunit protein uS2 (295 aa).

The interval 263 to 295 is disordered; that stretch reads KKFSKTKNIDEETNTEFEQALNDADENKNSDNA.

This sequence belongs to the universal ribosomal protein uS2 family.

This is Small ribosomal subunit protein uS2 from Rickettsia massiliae (strain Mtu5).